Reading from the N-terminus, the 158-residue chain is 2-amino-4-hydroxy-6-hydroxymethyldihydropteridine pyrophosphokinase (158 aa).

Belongs to the HPPK family.

It carries out the reaction 6-hydroxymethyl-7,8-dihydropterin + ATP = (7,8-dihydropterin-6-yl)methyl diphosphate + AMP + H(+). The protein operates within cofactor biosynthesis; tetrahydrofolate biosynthesis; 2-amino-4-hydroxy-6-hydroxymethyl-7,8-dihydropteridine diphosphate from 7,8-dihydroneopterin triphosphate: step 4/4. Functionally, catalyzes the transfer of pyrophosphate from adenosine triphosphate (ATP) to 6-hydroxymethyl-7,8-dihydropterin, an enzymatic step in folate biosynthesis pathway. The sequence is that of 2-amino-4-hydroxy-6-hydroxymethyldihydropteridine pyrophosphokinase (folK) from Methylorubrum extorquens (strain ATCC 14718 / DSM 1338 / JCM 2805 / NCIMB 9133 / AM1) (Methylobacterium extorquens).